We begin with the raw amino-acid sequence, 505 residues long: Histidine ammonia-lyase (505 aa).

Residues 141–143 (ASG) constitute a cross-link (5-imidazolinone (Ala-Gly)). 2,3-didehydroalanine (Ser) is present on Ser-142.

Belongs to the PAL/histidase family. Contains an active site 4-methylidene-imidazol-5-one (MIO), which is formed autocatalytically by cyclization and dehydration of residues Ala-Ser-Gly.

Its subcellular location is the cytoplasm. The catalysed reaction is L-histidine = trans-urocanate + NH4(+). The protein operates within amino-acid degradation; L-histidine degradation into L-glutamate; N-formimidoyl-L-glutamate from L-histidine: step 1/3. The polypeptide is Histidine ammonia-lyase (Bacillus cereus (strain AH187)).